A 176-amino-acid polypeptide reads, in one-letter code: Ribonuclease mitogillin (176 aa).

The signal sequence occupies residues 1 to 27; that stretch reads MVAIKNLFLLAATAVSVLAAPSPLDAR. 2 disulfide bridges follow: Cys32–Cys174 and Cys102–Cys158. The active site involves His76. Residue Glu122 is the Proton acceptor of the active site. His163 (proton donor) is an active-site residue.

The protein belongs to the ribonuclease U2 family.

The protein resides in the secreted. This purine-specific ribonuclease cleaves 28S RNA in eukaryotic ribosomes, inhibits protein synthesis, and shows antitumor activity. The chain is Ribonuclease mitogillin (mitF) from Aspergillus fumigatus (strain ATCC MYA-4609 / CBS 101355 / FGSC A1100 / Af293) (Neosartorya fumigata).